The chain runs to 656 residues: Rab proteins geranylgeranyltransferase component A 2 (656 aa).

Disordered regions lie at residues Met188–Ala209 and Pro609–Asn656. Over residues Glu639–Asn656 the composition is skewed to basic and acidic residues. At Ser649 the chain carries Phosphoserine.

This sequence belongs to the Rab GDI family. Monomer. Heterotrimer composed of RABGGTA, RABGGTB and CHML; within this trimer, RABGGTA and RABGGTB form the catalytic component B, while CHML (component A) mediates Rab protein binding. Interacts with RAB1A, RAB7A and RAB27A, but has much lower affinity for RAB1A, RAB7A and RAB27A than CHM. Interacts with the non-phosphorylated forms of RAB3A, RAB3B, RAB3C, RAB3D, RAB5B, RAB5C, RAB8A, RAB8B, RAB10, RAB12, RAB35, and RAB43.

Its subcellular location is the cytoplasm. The protein localises to the cytosol. In terms of biological role, substrate-binding subunit (component A) of the Rab geranylgeranyltransferase (GGTase) complex. Binds unprenylated Rab proteins and presents the substrate peptide to the catalytic component B. The component A is thought to be regenerated by transferring its prenylated Rab back to the donor membrane. Less effective than CHM in supporting prenylation of Rab3 family. The protein is Rab proteins geranylgeranyltransferase component A 2 (CHML) of Homo sapiens (Human).